Consider the following 621-residue polypeptide: Alpha-actinin-like protein 1 (621 aa).

Calponin-homology (CH) domains follow at residues 8 to 114 (SVQN…LRFT) and 123 to 230 (LTAK…HAFS). The interval 86–110 (LTNIGPADIVDGNLKLILGLIWTLI) is actin-binding. 3 EF-hand domains span residues 388 to 419 (LSTI…LGPL), 487 to 549 (DGIT…EIVM), and 550 to 618 (EELE…AEDK).

This sequence belongs to the alpha-actinin family.

Its subcellular location is the cytoplasm. The protein resides in the cytoskeleton. Its function is as follows. Binds to actin and is involved in actin-ring formation and organization. Plays a role in cytokinesis and is involved in septation. The sequence is that of Alpha-actinin-like protein 1 (ain1) from Schizosaccharomyces pombe (strain 972 / ATCC 24843) (Fission yeast).